Here is a 114-residue protein sequence, read N- to C-terminus: NADH-ubiquinone oxidoreductase chain 3 (114 aa).

3 consecutive transmembrane segments (helical) span residues alanine 3–leucine 23, phenylalanine 54–phenylalanine 74, and isoleucine 85–tryptophan 105.

It belongs to the complex I subunit 3 family.

It localises to the mitochondrion membrane. It catalyses the reaction a ubiquinone + NADH + 5 H(+)(in) = a ubiquinol + NAD(+) + 4 H(+)(out). Its function is as follows. Core subunit of the mitochondrial membrane respiratory chain NADH dehydrogenase (Complex I) that is believed to belong to the minimal assembly required for catalysis. Complex I functions in the transfer of electrons from NADH to the respiratory chain. The immediate electron acceptor for the enzyme is believed to be ubiquinone. The polypeptide is NADH-ubiquinone oxidoreductase chain 3 (mt-nd3) (Xenopus laevis (African clawed frog)).